Reading from the N-terminus, the 153-residue chain is D-aminoacyl-tRNA deacylase (153 aa).

A Gly-cisPro motif, important for rejection of L-amino acids motif is present at residues 137-138 (GP).

It belongs to the DTD family. Homodimer.

Its subcellular location is the cytoplasm. The enzyme catalyses glycyl-tRNA(Ala) + H2O = tRNA(Ala) + glycine + H(+). The catalysed reaction is a D-aminoacyl-tRNA + H2O = a tRNA + a D-alpha-amino acid + H(+). Its function is as follows. An aminoacyl-tRNA editing enzyme that deacylates mischarged D-aminoacyl-tRNAs. Also deacylates mischarged glycyl-tRNA(Ala), protecting cells against glycine mischarging by AlaRS. Acts via tRNA-based rather than protein-based catalysis; rejects L-amino acids rather than detecting D-amino acids in the active site. By recycling D-aminoacyl-tRNA to D-amino acids and free tRNA molecules, this enzyme counteracts the toxicity associated with the formation of D-aminoacyl-tRNA entities in vivo and helps enforce protein L-homochirality. The protein is D-aminoacyl-tRNA deacylase of Dehalococcoides mccartyi (strain ATCC BAA-2100 / JCM 16839 / KCTC 5957 / BAV1).